The chain runs to 264 residues: ATP synthase subunit a (264 aa).

6 helical membrane-spanning segments follow: residues 29 to 49, 90 to 110, 134 to 154, 177 to 197, 208 to 228, and 235 to 255; these read TWHIDSLFFSVGLGVLFLWLF, IAPLALTIFVWVFMMNFMDMI, DLNITFSLALGVFVLIIYYSI, IPVNLLLESVTLIAKPISLAL, LIFILIALMYGANLALSALGV, and LIFHILVITLQAFIFMMLTIV.

Belongs to the ATPase A chain family. As to quaternary structure, F-type ATPases have 2 components, CF(1) - the catalytic core - and CF(0) - the membrane proton channel. CF(1) has five subunits: alpha(3), beta(3), gamma(1), delta(1), epsilon(1). CF(0) has three main subunits: a(1), b(2) and c(9-12). The alpha and beta chains form an alternating ring which encloses part of the gamma chain. CF(1) is attached to CF(0) by a central stalk formed by the gamma and epsilon chains, while a peripheral stalk is formed by the delta and b chains.

It localises to the cell inner membrane. Functionally, key component of the proton channel; it plays a direct role in the translocation of protons across the membrane. This Shewanella loihica (strain ATCC BAA-1088 / PV-4) protein is ATP synthase subunit a.